The following is a 453-amino-acid chain: Bestrophin homolog 5 (453 aa).

4 helical membrane-spanning segments follow: residues Glu78 to Thr98, Asp113 to Ile133, Ile275 to Ile295, and Leu314 to Ala334.

The protein belongs to the anion channel-forming bestrophin (TC 1.A.46) family. Calcium-sensitive chloride channel subfamily. In terms of assembly, forms oligomers.

It localises to the cell membrane. Functionally, forms chloride channels. The protein is Bestrophin homolog 5 (best-5) of Caenorhabditis elegans.